The sequence spans 314 residues: Peroxisome biogenesis factor 10 (314 aa).

At methionine 1 to glutamate 7 the chain is on the peroxisomal matrix side. The helical transmembrane segment at isoleucine 8–leucine 37 threads the bilayer. Position 38 (glycine 38) is a topological domain, cytoplasmic. The helical transmembrane segment at glutamine 39–serine 60 threads the bilayer. At threonine 61–proline 90 the chain is on the peroxisomal matrix side. Residues serine 91 to isoleucine 110 form a helical membrane-spanning segment. The Cytoplasmic segment spans residues glutamine 111–aspartate 142. A helical membrane pass occupies residues valine 143–threonine 166. The Peroxisomal matrix portion of the chain corresponds to glycine 167–arginine 197. Residues phenylalanine 198–phenylalanine 218 form a helical membrane-spanning segment. At leucine 219–leucine 314 the chain is on the cytoplasmic side. Zn(2+) is bound by residues cysteine 255, cysteine 258, cysteine 269, histidine 271, cysteine 274, cysteine 277, cysteine 296, and cysteine 299. The RING-type zinc finger occupies cysteine 255–arginine 300.

It belongs to the pex2/pex10/pex12 family. As to quaternary structure, component of the PEX2-PEX10-PEX12 retrotranslocation channel.

It localises to the peroxisome membrane. It catalyses the reaction S-ubiquitinyl-[E2 ubiquitin-conjugating enzyme]-L-cysteine + [acceptor protein]-L-lysine = [E2 ubiquitin-conjugating enzyme]-L-cysteine + N(6)-ubiquitinyl-[acceptor protein]-L-lysine.. It functions in the pathway protein modification; protein ubiquitination. With respect to regulation, the E3 ubiquitin-protein ligase activity is stimulated by PEX12/prx-12. In terms of biological role, E3 ubiquitin-protein ligase component of a retrotranslocation channel required for peroxisome organization by mediating export of the PEX5/prx-5 receptor from peroxisomes to the cytosol, thereby promoting PEX5/prx-5 recycling. The retrotranslocation channel is composed of PEX2/prx-2, PEX10/prx-10 and PEX12/prx-12; each subunit contributing transmembrane segments that coassemble into an open channel that specifically allows the passage of PEX5/prx-5 through the peroxisomal membrane. PEX10/prx-10 also regulates PEX5 recycling by acting as a E3 ubiquitin-protein ligase. When PEX5/prx-5 recycling is compromised, PEX10/prx-10 catalyzes polyubiquitination of PEX5/prx-5 during its passage through the retrotranslocation channel, leading to its degradation. This Caenorhabditis elegans protein is Peroxisome biogenesis factor 10.